The chain runs to 584 residues: MVSLSIPSMLRQCVNLHPDGTAFTYIDYERDSEGISESLTWSQVYRRTLNVAAEVRRHAAIGDRAVILAPQGLDYIVAFLGALQAGLIAVPLSAPLGGASDERVDAVVRDAKPNVVLTTSAIMGDVVPRVTPPPGIASPPTVAVDQLDLDSPIRSNIVDDSLQTTAYLQYTSGSTRTPAGVMITYKNILANFQQMISAYFADTGAVPPLDLFIMSWLPFYHDMGLVLGVCAPIIVGCGAVLTSPVAFLQRPARWLQLMAREGQAFSAAPNFAFELTAAKAIDDDLAGLDLGRIKTILCGSERVHPATLKRFVDRFSRFNLREFAIRPAYGLAEATVYVATSQAGQPPEIRYFEPHELSAGQAKPCATGAGTALVSYPLPQSPIVRIVDPNTNTECPPGTIGEIWVHGDNVAGGYWEKPDETERTFGGALVAPSAGTPVGPWLRTGDSGFVSEDKFFIIGRIKDLLIVYGRNHSPDDIEATIQEITRGRCAAIAVPSNGVEKLVAIVELNNRGNLDTERLSFVTREVTSAISTSHGLSVSDLVLVAPGSIPITTSGKVRRAECVKLYRHNEFTRLDAKPLQASDL.

Transmembrane regions (helical) follow at residues 199–219 (YFAD…WLPF) and 225–245 (LVLG…TSPV).

This sequence belongs to the ATP-dependent AMP-binding enzyme family.

It is found in the membrane. It catalyses the reaction holo-[(hydroxy)phthioceranic acid synthase] + hexadecanoate + ATP = hexadecanoyl-[(hydroxy)phthioceranic acid synthase] + AMP + diphosphate. It carries out the reaction holo-[(hydroxy)phthioceranic acid synthase] + octadecanoate + ATP = octadecanoyl-[(hydroxy)phthioceranic acid synthase] + AMP + diphosphate. The protein operates within lipid metabolism; fatty acid biosynthesis. In terms of biological role, catalyzes the activation of long-chain fatty acids as acyl-adenylates (acyl-AMP), which are then transferred to the multifunctional polyketide synthase (PKS) type III for further chain extension. Involved in the biosynthesis of sulfolipid 1 (SL-1). In Mycobacterium bovis (strain ATCC BAA-935 / AF2122/97), this protein is Long-chain-fatty-acid--AMP ligase FadD23 (fadD23).